Consider the following 204-residue polypeptide: Probable nicotinate-nucleotide adenylyltransferase (204 aa).

The protein belongs to the NadD family.

The catalysed reaction is nicotinate beta-D-ribonucleotide + ATP + H(+) = deamido-NAD(+) + diphosphate. The protein operates within cofactor biosynthesis; NAD(+) biosynthesis; deamido-NAD(+) from nicotinate D-ribonucleotide: step 1/1. Catalyzes the reversible adenylation of nicotinate mononucleotide (NaMN) to nicotinic acid adenine dinucleotide (NaAD). The polypeptide is Probable nicotinate-nucleotide adenylyltransferase (Mycobacterium sp. (strain JLS)).